A 156-amino-acid chain; its full sequence is Small ribosomal subunit protein uS7 (156 aa).

This sequence belongs to the universal ribosomal protein uS7 family. As to quaternary structure, part of the 30S ribosomal subunit. Contacts proteins S9 and S11.

One of the primary rRNA binding proteins, it binds directly to 16S rRNA where it nucleates assembly of the head domain of the 30S subunit. Is located at the subunit interface close to the decoding center, probably blocks exit of the E-site tRNA. This is Small ribosomal subunit protein uS7 from Rubrobacter xylanophilus (strain DSM 9941 / JCM 11954 / NBRC 16129 / PRD-1).